A 505-amino-acid polypeptide reads, in one-letter code: Histidine ammonia-lyase (505 aa).

Residues 141–143 constitute a cross-link (5-imidazolinone (Ala-Gly)); that stretch reads ASG. Serine 142 is subject to 2,3-didehydroalanine (Ser).

The protein belongs to the PAL/histidase family. In terms of processing, contains an active site 4-methylidene-imidazol-5-one (MIO), which is formed autocatalytically by cyclization and dehydration of residues Ala-Ser-Gly.

Its subcellular location is the cytoplasm. It carries out the reaction L-histidine = trans-urocanate + NH4(+). Its pathway is amino-acid degradation; L-histidine degradation into L-glutamate; N-formimidoyl-L-glutamate from L-histidine: step 1/3. This chain is Histidine ammonia-lyase, found in Bacillus mycoides (strain KBAB4) (Bacillus weihenstephanensis).